Reading from the N-terminus, the 148-residue chain is 3-dehydroquinate dehydratase (148 aa).

The substrate site is built by N74, H80, and D87. Residue H100 is the Proton donor of the active site. Substrate-binding positions include 101 to 102 (LS) and R111.

Belongs to the type-II 3-dehydroquinase family. In terms of assembly, homododecamer.

It carries out the reaction 3-dehydroquinate = 3-dehydroshikimate + H2O. The protein operates within metabolic intermediate biosynthesis; chorismate biosynthesis; chorismate from D-erythrose 4-phosphate and phosphoenolpyruvate: step 3/7. The sequence is that of 3-dehydroquinate dehydratase (yqhS) from Bacillus subtilis (strain 168).